A 225-amino-acid polypeptide reads, in one-letter code: PKHD-type hydroxylase YbiX (225 aa).

The Fe2OG dioxygenase domain occupies 78–177 (TLSTPLFNRY…RVASFMWIQS (100 aa)). Fe cation-binding residues include H96, D98, and H158. R168 serves as a coordination point for 2-oxoglutarate.

The cofactor is Fe(2+). It depends on L-ascorbate as a cofactor.

The protein is PKHD-type hydroxylase YbiX of Escherichia coli O6:K15:H31 (strain 536 / UPEC).